We begin with the raw amino-acid sequence, 904 residues long: Endoplasmic reticulum metallopeptidase 1 (904 aa).

The residue at position 1 (Met-1) is an N-acetylmethionine. The Cytoplasmic portion of the chain corresponds to 1–63 (MEWGSESAAV…PGGSGGASRG (63 aa)). The interval 1-65 (MEWGSESAAV…GSGGASRGAG (65 aa)) is disordered. Gly residues predominate over residues 55–65 (GGSGGASRGAG). The chain crosses the membrane as a helical span at residues 64–84 (AGTGLSEVRAALGLALYLIAL). The Lumenal segment spans residues 85–399 (RTLVQLSLQQ…AASKYRHGNM (315 aa)). N-linked (GlcNAc...) asparagine glycosylation occurs at Asn-182. The cysteines at positions 204 and 222 are disulfide-linked. Residues His-205 and Asp-217 each contribute to the Zn(2+) site. The Proton acceptor role is filled by Glu-251. Zn(2+) is bound by residues Glu-252, Glu-278, and His-354. The helical transmembrane segment at 400–420 (VFFDVLGLFVIAYPSRIGSII) threads the bilayer. Over 421 to 457 (NYMVVMGVVLYLGKKFLQPKHKTGNYKKDFLCGLGIT) the chain is Cytoplasmic. A helical transmembrane segment spans residues 458-478 (LISWFTSLVTVLIIAVFISLI). The Lumenal portion of the chain corresponds to 479 to 489 (GQSLSWYNHFY). Residues 490–510 (VSVCLYGTATVAKIILIHTLA) traverse the membrane as a helical segment. Topologically, residues 511–519 (KRFYYMNAS) are cytoplasmic. Residues 520–540 (AQYLGEVFFDISLFVHCCFLV) form a helical membrane-spanning segment. Position 541 (Thr-541) is a topological domain, lumenal. Residues 542 to 562 (LTYQGLCSAFISAVWVAFPLL) form a helical membrane-spanning segment. Topologically, residues 563 to 579 (TKLCVHKDFKQHGAQGK) are cytoplasmic. A helical membrane pass occupies residues 580-600 (FIAFYLLGMFIPYLYALYLIW). The Lumenal portion of the chain corresponds to 601–621 (AVFEMFTPILGRSGSEIPPDV). Residues 622-642 (VLASILAGCTMILSSYFINFI) form a helical membrane-spanning segment. The Cytoplasmic segment spans residues 643–651 (YLAKSTKKT). A helical membrane pass occupies residues 652–672 (MLTLTLVCAITFLLVCSGTFF). At 673 to 904 (PYSSNPANPK…WVCTYDLFVF (232 aa)) the chain is on the lumenal side. Asn-730 carries an N-linked (GlcNAc...) asparagine glycan.

It belongs to the peptidase M28 family. The cofactor is Zn(2+).

It localises to the endoplasmic reticulum membrane. In terms of biological role, within the ovary, required for the organization of somatic cells and oocytes into discrete follicular structures. The chain is Endoplasmic reticulum metallopeptidase 1 from Homo sapiens (Human).